Here is a 586-residue protein sequence, read N- to C-terminus: CTP synthase (586 aa).

Residues 1–278 are amidoligase domain; sequence MRKHPQTATK…DAFVVRRLNL (278 aa). Serine 20 contacts CTP. Serine 20 provides a ligand contact to UTP. Residues 21–26 and aspartate 78 contribute to the ATP site; that span reads SLGKGL. Residues aspartate 78 and glutamate 152 each contribute to the Mg(2+) site. Residues 159–161, 199–204, and lysine 235 contribute to the CTP site; these read DIE and KTKPTQ. Residues 199–204 and lysine 235 each bind UTP; that span reads KTKPTQ. In terms of domain architecture, Glutamine amidotransferase type-1 spans 303–551; it reads RIALVGKYVE…VGAAIDYKAG (249 aa). Glycine 366 contacts L-glutamine. Residue cysteine 393 is the Nucleophile; for glutamine hydrolysis of the active site. L-glutamine-binding positions include 394-397, glutamate 416, and arginine 477; that span reads LGLQ. Residues histidine 524 and glutamate 526 contribute to the active site. Positions 560–586 are disordered; that stretch reads EIPEHTPNGSSHRDGVGQPLPEPASRG.

Belongs to the CTP synthase family. In terms of assembly, homotetramer.

It carries out the reaction UTP + L-glutamine + ATP + H2O = CTP + L-glutamate + ADP + phosphate + 2 H(+). It catalyses the reaction L-glutamine + H2O = L-glutamate + NH4(+). The catalysed reaction is UTP + NH4(+) + ATP = CTP + ADP + phosphate + 2 H(+). The protein operates within pyrimidine metabolism; CTP biosynthesis via de novo pathway; CTP from UDP: step 2/2. Allosterically activated by GTP, when glutamine is the substrate; GTP has no effect on the reaction when ammonia is the substrate. The allosteric effector GTP functions by stabilizing the protein conformation that binds the tetrahedral intermediate(s) formed during glutamine hydrolysis. Inhibited by the product CTP, via allosteric rather than competitive inhibition. Its function is as follows. Catalyzes the ATP-dependent amination of UTP to CTP with either L-glutamine or ammonia as the source of nitrogen. Regulates intracellular CTP levels through interactions with the four ribonucleotide triphosphates. In Mycobacterium tuberculosis (strain ATCC 25177 / H37Ra), this protein is CTP synthase.